The chain runs to 517 residues: Protein disulfide-isomerase A5 (517 aa).

A signal peptide spans 1-21; sequence MARAWGLLLAIGVILPTWLSS. 4 cysteine pairs are disulfide-bonded: Cys83/Cys92, Cys180/Cys183, Cys303/Cys306, and Cys424/Cys427. Thioredoxin domains are found at residues 132-259, 268-382, and 376-504; these read FLKD…NPQP, PWAD…NPEA, and WMQN…TLRE. The Prevents secretion from ER signature appears at 514–517; it reads REDL.

The protein belongs to the protein disulfide isomerase family.

The protein resides in the endoplasmic reticulum lumen. The enzyme catalyses Catalyzes the rearrangement of -S-S- bonds in proteins.. The polypeptide is Protein disulfide-isomerase A5 (Pdia5) (Rattus norvegicus (Rat)).